The primary structure comprises 25 residues: Fibrinolytic enzyme large subunit (25 aa).

The region spanning 1-25 is the Peptidase S1 domain; sequence VIGGTNASPGEIPWQLSQQRQSGSW. Residues 1–25 form a disordered region; the sequence is VIGGTNASPGEIPWQLSQQRQSGSW. Polar residues predominate over residues 15-25; sequence QLSQQRQSGSW.

This sequence belongs to the peptidase S1 family. As to quaternary structure, heterodimer of a large and a small subunit held together by hydrophobic interactions.

Functionally, cleaves the carboxyl side of basic amino acids, small neutral amino acids, and Met residue. It is also a plasminogen activator. In Eisenia fetida (Red wiggler worm), this protein is Fibrinolytic enzyme large subunit.